A 393-amino-acid chain; its full sequence is tRNA(Met) cytidine acetate ligase (393 aa).

3 residues coordinate ATP: G81, N142, and R167.

This sequence belongs to the TmcAL family.

The protein localises to the cytoplasm. The catalysed reaction is cytidine(34) in elongator tRNA(Met) + acetate + ATP = N(4)-acetylcytidine(34) in elongator tRNA(Met) + AMP + diphosphate. Functionally, catalyzes the formation of N(4)-acetylcytidine (ac(4)C) at the wobble position of elongator tRNA(Met), using acetate and ATP as substrates. First activates an acetate ion to form acetyladenylate (Ac-AMP) and then transfers the acetyl group to tRNA to form ac(4)C34. The polypeptide is tRNA(Met) cytidine acetate ligase (Bacillus cereus (strain 03BB102)).